A 347-amino-acid polypeptide reads, in one-letter code: NADH-ubiquinone oxidoreductase chain 2 (347 aa).

A run of 11 helical transmembrane segments spans residues 3–23 (PIIL…VMIS), 25–45 (HWLL…PIMM), 67–87 (SMLL…WTVM), 96–116 (MLMT…FWVP), 122–142 (IPLS…MSVL), 145–165 (ILPS…ITIG), 178–198 (IMAY…LYNP), 200–220 (MTLL…TLFM), 237–257 (APIM…LPPL), 274–294 (DSII…YFYM), and 325–345 (LLPT…ILSI).

Belongs to the complex I subunit 2 family. In terms of assembly, core subunit of respiratory chain NADH dehydrogenase (Complex I) which is composed of 45 different subunits. Interacts with TMEM242.

It is found in the mitochondrion inner membrane. It catalyses the reaction a ubiquinone + NADH + 5 H(+)(in) = a ubiquinol + NAD(+) + 4 H(+)(out). Its function is as follows. Core subunit of the mitochondrial membrane respiratory chain NADH dehydrogenase (Complex I) which catalyzes electron transfer from NADH through the respiratory chain, using ubiquinone as an electron acceptor. Essential for the catalytic activity and assembly of complex I. The chain is NADH-ubiquinone oxidoreductase chain 2 from Ovis aries (Sheep).